The primary structure comprises 836 residues: Protein IWS1 homolog A (836 aa).

The disordered stretch occupies residues 1–542; it reads MEADNYSPEH…DMKSGKMGDY (542 aa). 8 stretches are compositionally biased toward basic and acidic residues: residues 20-36, 43-122, 133-148, 157-186, 206-218, 288-309, 370-386, and 458-469; these read QDERDSASDDEGNEQRS, HQSE…DRSP, EPVRHSASDSEDDVPR, DERHIKKTASDSEDEAPAKHRVSDTEDKAP, DSKDEAPPKHAAS, VPVKRAASDSEEETHPKGKASD, RSSESDSSDKVDGKKLQ, and ERKSKTETKSAD. Acidic residues predominate over residues 476-485; the sequence is SDSENEEENL. The segment covering 533-542 has biased composition (basic and acidic residues); sequence DMKSGKMGDY. The TFIIS N-terminal domain occupies 631–709; it reads SAIKEWLTPL…NEWSRPIFGL (79 aa). The tract at residues 714–746 is disordered; it reads KGMTREEREQRDIEQMPQRRRMSSSGGQTPRRD. Positions 716–727 are enriched in basic and acidic residues; the sequence is MTREEREQRDIE.

The protein belongs to the IWS1 family.

The protein resides in the nucleus. Transcription factor which plays a key role in defining the composition of the RNA polymerase II (RNAPII) elongation complex and in modulating the production of mature mRNA transcripts. This chain is Protein IWS1 homolog A (iws1-a), found in Xenopus laevis (African clawed frog).